The chain runs to 791 residues: Solute carrier family 26 member 9 (791 aa).

The Cytoplasmic segment spans residues 1-70; the sequence is MSQPRPRYVV…WLPKYKIKDY (70 aa). Residues 71-96 traverse the membrane as a helical segment; it reads IIPDLLGGLSGGSIQVPQGMAFALLA. The Extracellular portion of the chain corresponds to 97–99; it reads NLP. A helical membrane pass occupies residues 100–117; sequence AVNGLYSSFFPLLTYFFL. Over 118 to 128 the chain is Cytoplasmic; it reads GGVHQMVPGTF. Residues 129–142 traverse the membrane as a helical segment; the sequence is AVISILVGNICLQL. The Extracellular segment spans residues 143–171; it reads APESKFQVFNNATNESYVDTAAMEAERLH. A helical transmembrane segment spans residues 172–190; it reads VSATLACLTAIIQMGLGFM. Topologically, residues 191–202 are cytoplasmic; that stretch reads QFGFVAIYLSES. Residues 203 to 224 traverse the membrane as a helical segment; sequence FIRGFMTAAGLQILISVLKYIF. The Extracellular portion of the chain corresponds to 225–235; that stretch reads GLTIPSYTGPG. Positions 236-244 form an intramembrane region, helical; the sequence is SIVFTFIDI. Topologically, residues 245–254 are extracellular; it reads CKNLPHTNIA. The helical transmembrane segment at 255 to 273 threads the bilayer; sequence SLIFALISGAFLVLVKELN. Topologically, residues 274-281 are cytoplasmic; that stretch reads ARYMHKIR. A helical transmembrane segment spans residues 282–297; it reads FPIPTEMIVVVVATAI. The Extracellular portion of the chain corresponds to 298-327; it reads SGGCKMPKKYHMQIVGEIQRGFPTPVSPVV. A helical membrane pass occupies residues 328-348; it reads SQWKDMIGTAFSLAIVSYVIN. Residues 349-366 lie on the Cytoplasmic side of the membrane; it reads LAMGRTLANKHGYDVDSN. The helical transmembrane segment at 367–382 threads the bilayer; that stretch reads QEMIALGCSNFFGSFF. The Extracellular segment spans residues 383–390; the sequence is KIHVICCA. The helical transmembrane segment at 391–400 threads the bilayer; it reads LSVTLAVDGA. At 401-404 the chain is on the cytoplasmic side; it reads GGKS. A helical membrane pass occupies residues 405 to 423; it reads QVASLCVSLVVMITMLVLG. Residues 424–428 lie on the Extracellular side of the membrane; the sequence is IYLYP. The helical transmembrane segment at 429–450 threads the bilayer; that stretch reads LPKSVLGALIAVNLKNSLKQLT. Over 451-464 the chain is Cytoplasmic; the sequence is DPYYLWRKSKLDCC. A helical membrane pass occupies residues 465–476; sequence IWVVSFLSSFFL. A topological domain (extracellular) is located at residue Ser-477. Residues 478–489 traverse the membrane as a helical segment; the sequence is LPYGVAVGVAFS. Residues 490–791 lie on the Cytoplasmic side of the membrane; the sequence is VLVVVFQTQF…MFHAETLTAL (302 aa). The STAS domain occupies 519-737; that stretch reads TYNRAQDIQG…PSIHDAVLFA (219 aa). The segment at 602–650 is disordered; it reads FENAPPTDPNNNQTPANGTSVSYITFSPDSSSPAQSEPPASAEAPGEPS. Positions 610 to 626 are enriched in polar residues; sequence PNNNQTPANGTSVSYIT. Residues 628–650 show a composition bias toward low complexity; that stretch reads SPDSSSPAQSEPPASAEAPGEPS.

This sequence belongs to the SLC26A/SulP transporter (TC 2.A.53) family. As to quaternary structure, homodimer. Predominantly expressed in lung at the luminal side of the bronchiolar and alveolar epithelium of lung. To a lower extent, also expressed in pancreas and prostate.

The protein resides in the cell membrane. It localises to the endomembrane system. It carries out the reaction chloride(in) = chloride(out). The catalysed reaction is hydrogencarbonate(in) + chloride(out) = hydrogencarbonate(out) + chloride(in). With respect to regulation, inhibited by ammonium and thiosulfate. Its function is as follows. Ion transporter that can act both as an ion channel and anion exchanger. Mainly acts as a chloride channel, which mediate uncoupled chloride anion transport in an alternate-access mechanism where a saturable binding site is alternately exposed to either one or the other side of the membrane. Also acts as a DIDS- and thiosulfate- sensitive anion exchanger the exchange of chloride for bicarbonate ions across the cell membrane. The polypeptide is Solute carrier family 26 member 9 (Homo sapiens (Human)).